The following is a 317-amino-acid chain: Probable cell division protein WhiA (317 aa).

Positions 281 to 314 (TLKELGEMINPPIGKSGVNHRLRKLDQIADRERG) form a DNA-binding region, H-T-H motif.

Belongs to the WhiA family.

Functionally, involved in cell division and chromosome segregation. This is Probable cell division protein WhiA from Alkaliphilus metalliredigens (strain QYMF).